We begin with the raw amino-acid sequence, 283 residues long: Movement protein (283 aa).

Belongs to the cucumovirus movement protein family.

It localises to the host cell junction. It is found in the host plasmodesma. In terms of biological role, transports viral genome to neighboring plant cells directly through plasmosdesmata, without any budding. The movement protein allows efficient cell to cell propagation, by bypassing the host cell wall barrier. Acts by forming a tubular structure at the host plasmodesmata, enlarging it enough to allow free passage of virion capsids. This chain is Movement protein, found in Cucumis sativus (Cucumber).